The chain runs to 176 residues: Ribosome rescue factor SmrB (176 aa).

The Smr domain occupies 93–168 (LDLHGYRQSE…GDAALLVLID (76 aa)).

It belongs to the SmrB family. Associates with collided ribosomes, but not with correctly translating polysomes.

In terms of biological role, acts as a ribosome collision sensor. Detects stalled/collided disomes (pairs of ribosomes where the leading ribosome is stalled and a second ribosome has collided with it) and endonucleolytically cleaves mRNA at the 5' boundary of the stalled ribosome. Stalled/collided disomes form a new interface (primarily via the 30S subunits) that binds SmrB. Cleaved mRNA becomes available for tmRNA ligation, leading to ribosomal subunit dissociation and rescue of stalled ribosomes. The protein is Ribosome rescue factor SmrB of Shewanella baltica (strain OS195).